A 190-amino-acid polypeptide reads, in one-letter code: Probable oligoribonuclease (190 aa).

The 163-residue stretch at 19–181 folds into the Exonuclease domain; it reads MVWVDLEMTG…QDIEESIEEL (163 aa). Tyr-140 is a catalytic residue.

This sequence belongs to the oligoribonuclease family.

Functionally, 3'-to-5' exoribonuclease specific for small oligoribonucleotides. This Dictyostelium discoideum (Social amoeba) protein is Probable oligoribonuclease (rexo2-1).